Consider the following 3097-residue polypeptide: Neural-cadherin (3097 aa).

The N-terminal stretch at 1-36 (MAARRCLNQLRQRYITNRFNICTCAIFLISLPFILA) is a signal peptide. 2 N-linked (GlcNAc...) asparagine glycosylation sites follow: asparagine 97 and asparagine 150. Residues 181–305 (VRENQPAGTR…LDENDNRPIF (125 aa)) form the Cadherin 1 domain. 2 N-linked (GlcNAc...) asparagine glycosylation sites follow: asparagine 325 and asparagine 426. 15 Cadherin domains span residues 430-543 (HREK…PPYF), 554-651 (VQLN…APQF), 660-756 (IPEN…APKF), 766-858 (VDED…EPKF), 867-968 (VDEN…KPVF), 978-1078 (VEEG…PPLF), 1087-1183 (VKQD…PPVW), 1193-1299 (VKEN…IPLF), 1307-1414 (VLEG…PPYF), 1423-1514 (VDEN…PPVF), 1523-1630 (ITEE…APIF), 1639-1742 (VTEN…PPQF), 1749-1861 (TEVD…KPHF), 1870-1966 (VFED…APKF), and 1974-2085 (LPEH…QPGS). N-linked (GlcNAc...) asparagine glycosylation occurs at asparagine 930. An N-linked (GlcNAc...) asparagine glycan is attached at asparagine 1266. 11 disulfide bridges follow: cysteine 2346/cysteine 2357, cysteine 2351/cysteine 2366, cysteine 2368/cysteine 2377, cysteine 2559/cysteine 2585, cysteine 2592/cysteine 2607, cysteine 2601/cysteine 2616, cysteine 2618/cysteine 2627, cysteine 2787/cysteine 2822, cysteine 2869/cysteine 2880, cysteine 2874/cysteine 2891, and cysteine 2893/cysteine 2902. One can recognise an EGF-like 1 domain in the interval 2346-2377 (CRTTPCHNGGRCVDTRFGPHCSCPVGYTGPRC). The Laminin G-like 1 domain occupies 2379-2585 (QTTRSFRGNG…GLSRNSVAGC (207 aa)). An EGF-like 2 domain is found at 2592-2627 (CAQTETTARCWEHGNCVGSLSEARCHCRPGWTGPAC). Positions 2631 to 2822 (TIPTTFKAQS…TMARNLEKGC (192 aa)) constitute a Laminin G-like 2 domain. Residues 2869–2902 (CLDMPCMNGATCINLEPRLRYRCICPDGFWGENC) enclose the EGF-like 3 domain. Residues 2917–2937 (ALAAILVCLLIILILVLVFVV) traverse the membrane as a helical segment. The Cytoplasmic portion of the chain corresponds to 2938 to 3097 (YNRRREAHIK…PNPHNTELEL (160 aa)).

In terms of tissue distribution, in the embryo, the protein first appears in the mesoderm at stage 9 and is present in the myoblasts and muscle fibers by stage 12 and stage 14, respectively. At stage 12 the protein is also located in the axons of the entire CNS, but not in the glial cells. In third instar larvae protein is expressed in the CNS neuropile, photoreceptor axons and precursors of adult muscles.

The protein localises to the cell membrane. Its function is as follows. Cadherins are calcium-dependent cell adhesion proteins. They preferentially interact with themselves in a homophilic manner in connecting cells; cadherins may thus contribute to the sorting of heterogeneous cell types. May associate with arm neural isoform and participate in the transmission of developmental information. The polypeptide is Neural-cadherin (CadN) (Drosophila melanogaster (Fruit fly)).